The sequence spans 251 residues: Ubiquinone/menaquinone biosynthesis C-methyltransferase UbiE (251 aa).

Residues threonine 74, aspartate 95, and 123-124 each bind S-adenosyl-L-methionine; that span reads NA.

This sequence belongs to the class I-like SAM-binding methyltransferase superfamily. MenG/UbiE family.

It carries out the reaction a 2-demethylmenaquinol + S-adenosyl-L-methionine = a menaquinol + S-adenosyl-L-homocysteine + H(+). It catalyses the reaction a 2-methoxy-6-(all-trans-polyprenyl)benzene-1,4-diol + S-adenosyl-L-methionine = a 5-methoxy-2-methyl-3-(all-trans-polyprenyl)benzene-1,4-diol + S-adenosyl-L-homocysteine + H(+). The protein operates within quinol/quinone metabolism; menaquinone biosynthesis; menaquinol from 1,4-dihydroxy-2-naphthoate: step 2/2. It participates in cofactor biosynthesis; ubiquinone biosynthesis. Functionally, methyltransferase required for the conversion of demethylmenaquinol (DMKH2) to menaquinol (MKH2) and the conversion of 2-polyprenyl-6-methoxy-1,4-benzoquinol (DDMQH2) to 2-polyprenyl-3-methyl-6-methoxy-1,4-benzoquinol (DMQH2). In Shewanella sp. (strain ANA-3), this protein is Ubiquinone/menaquinone biosynthesis C-methyltransferase UbiE.